We begin with the raw amino-acid sequence, 277 residues long: MIOREX complex component 2 (277 aa).

It belongs to the NAD(P)-dependent epimerase/dehydratase family. In terms of assembly, associates with the mitochondrial ribosome. Component of a multi-subunit COQ enzyme complex.

The protein localises to the mitochondrion. Its pathway is cofactor biosynthesis; ubiquinone biosynthesis. Functionally, component of MIOREX complexes, large expressome-like assemblies of ribosomes with factors involved in all the steps of post-transcriptional gene expression. Component of a multi-subunit COQ enzyme complex required for coenzyme Q biosynthesis. The protein is MIOREX complex component 2 of Saccharomyces cerevisiae (strain ATCC 204508 / S288c) (Baker's yeast).